We begin with the raw amino-acid sequence, 274 residues long: E3 ubiquitin-protein ligase complex SLX5-SLX8 subunit SLX8 (274 aa).

Disordered stretches follow at residues 1–117 and 136–159; these read MARR…GNNI and ANTPSASPMLDAAPPTTKPGTNSK. Residues 13–28 are compositionally biased toward basic and acidic residues; the sequence is ENLRIKRVRLESVRQN. Serine 50 carries the post-translational modification Phosphoserine. Threonine 66 is modified (phosphothreonine). A compositionally biased stretch (acidic residues) spans 66–75; the sequence is TSEEDGDDDL. Serine 67 is subject to Phosphoserine. Residues 97–108 show a composition bias toward basic and acidic residues; sequence GNHDRETMHTEE. Residues 206-250 form an RING-type zinc finger; that stretch reads CPICFEPPETALMTLCGHVFCCPCLFQMVNSSRTCRQFGHCALCR.

Component of the heterodimeric SUMO-targeted ubiquitin ligase (STUbL) complex composed of SLX5 and SLX8.

It is found in the nucleus. The protein localises to the chromosome. The protein resides in the centromere. Its subcellular location is the kinetochore. The enzyme catalyses S-ubiquitinyl-[E2 ubiquitin-conjugating enzyme]-L-cysteine + [acceptor protein]-L-lysine = [E2 ubiquitin-conjugating enzyme]-L-cysteine + N(6)-ubiquitinyl-[acceptor protein]-L-lysine.. Its pathway is protein modification; protein ubiquitination. Component of the SUMO-targeted ubiquitin ligase (STUbL) complex SLX5/SLX8 that mediates ubiquitination and subsequent desumoylation of sumoylated proteins and proteins containing SUMO-like domains for their degradation. The STUbL complex SLX5/SLX8 stimulates ubiquitin conjugating enzymes, including UBC1, UBC4, UBC5 and UBC13-MMS2, and mediates the proteolytic down-regulation of sumoylated proteins. The STUbL complex SLX5/SLX8 is involved in ubiquitin-mediated degradation of histone variant CSE4, preventing mislocalization to euchromatin. The complex plays an essential role in maintenance of chromosome stability and links SUMO-dependent ubiquitination to a centromere-specific function during mitosis. The complex is involved in proteolysis of spindle positioning protein KAR9 and ensures correct spindle function by regulating levels of microtubule-associated proteins. During replication, the complex helps to prevent DNA lesions via recombination and has a role in localizing the DNA damage protein DCD2. The complex especially ubiquitinates the nuclease YEN1 and prevents persistent accumulation of a fraction of YEN1 associated with sites of activity in late G2/M and helps maintain the balance between pro- and anti-crossover pathways during homologous recombination. It is also involved in ubiquitin-mediated degradation of DNA repair proteins RAD52 and RAD57. Finally, the complex is recruited to distinct genomic hotspots of non-H2B protein ubiquitination (ub-hotspots) by the sumoylated transcription factor-like protein EUC1 where it ubiquitinates EUC1 and presumably other targets. In Saccharomyces cerevisiae (strain ATCC 204508 / S288c) (Baker's yeast), this protein is E3 ubiquitin-protein ligase complex SLX5-SLX8 subunit SLX8 (SLX8).